The chain runs to 242 residues: Small ribosomal subunit protein uS2 (242 aa).

This sequence belongs to the universal ribosomal protein uS2 family.

The protein is Small ribosomal subunit protein uS2 of Shewanella piezotolerans (strain WP3 / JCM 13877).